The chain runs to 392 residues: MTLLGTALRPAATRVMLLGAGELGKEVAIECQRLGIEVIAVDRYPDAPAMHVAHRSHVINMLDGEALRHVITEEKPHYIVPEIEAIATDTLRELEGEGLNVVPCARATQLTMNREGIRRLAAEELGLPTSTYRFADSEASFHDAVAAVGFPCIVKPVMSSSGKGQSFIRSAEQLAQAWEYAQQGGRAGAGRVIVEGVVKFDFEITLLTVSAVDGVHFCAPVGHRQQDGDYRESWQPQQMSELALKRAQEIARHVVLALGGHGLFGVELFVCGDEVIFSEVSPRPHDTGMVTLISQDLSEFALHVRAFLGMPIGAIRQYGPAASAVILPQLTSQNVTFDDVHAAVGAGVQVRLFGKPEIDGTRRLGVALATGENVEEAVIRAKKAASRVTVKG.

N(1)-(5-phospho-beta-D-ribosyl)glycinamide is bound by residues 22–23 (EL) and Glu82. Residues Arg114, Lys155, 160–165 (SSGKGQ), 195–198 (EGVV), and Glu203 contribute to the ATP site. The ATP-grasp domain maps to 119–308 (RLAAEELGLP…EFALHVRAFL (190 aa)). The Mg(2+) site is built by Glu267 and Glu279. N(1)-(5-phospho-beta-D-ribosyl)glycinamide contacts are provided by residues Asp286, Lys355, and 362–363 (RR).

The protein belongs to the PurK/PurT family. As to quaternary structure, homodimer.

The catalysed reaction is N(1)-(5-phospho-beta-D-ribosyl)glycinamide + formate + ATP = N(2)-formyl-N(1)-(5-phospho-beta-D-ribosyl)glycinamide + ADP + phosphate + H(+). The protein operates within purine metabolism; IMP biosynthesis via de novo pathway; N(2)-formyl-N(1)-(5-phospho-D-ribosyl)glycinamide from N(1)-(5-phospho-D-ribosyl)glycinamide (formate route): step 1/1. Its function is as follows. Involved in the de novo purine biosynthesis. Catalyzes the transfer of formate to 5-phospho-ribosyl-glycinamide (GAR), producing 5-phospho-ribosyl-N-formylglycinamide (FGAR). Formate is provided by PurU via hydrolysis of 10-formyl-tetrahydrofolate. The chain is Formate-dependent phosphoribosylglycinamide formyltransferase from Salmonella paratyphi A (strain ATCC 9150 / SARB42).